A 118-amino-acid chain; its full sequence is Large ribosomal subunit protein bL19 (118 aa).

It belongs to the bacterial ribosomal protein bL19 family.

Its function is as follows. This protein is located at the 30S-50S ribosomal subunit interface and may play a role in the structure and function of the aminoacyl-tRNA binding site. This chain is Large ribosomal subunit protein bL19, found in Helicobacter pylori (strain HPAG1).